The primary structure comprises 264 residues: Major prion protein (264 aa).

The signal sequence occupies residues 1–24 (MVKSHIGSWILVLFVAMWSDVGLC). The interaction with GRB2, ERI3 and SYN1 stretch occupies residues 25–241 (KKRPKPGGGW…ESQAYYQRGA (217 aa)). The tract at residues 28–118 (PKPGGGWNTG…QWNKPSKPKT (91 aa)) is disordered. Residues 37-54 (GGSRYPGPGSPGGNRYPP) show a composition bias toward low complexity. 6 repeat units span residues 54-62 (PQGGGGWGQ), 63-70 (PHGGGWGQ), 71-78 (PHGGGWGQ), 79-86 (PHGGGWGQ), 87-94 (PHGGGWGQ), and 95-103 (PHGGGGWGQ). The 6 X 8 AA tandem repeats of P-H-G-G-G-W-G-Q stretch occupies residues 54–103 (PQGGGGWGQPHGGGWGQPHGGGWGQPHGGGWGQPHGGGWGQPHGGGGWGQ). Residues 55-107 (QGGGGWGQPHGGGWGQPHGGGWGQPHGGGWGQPHGGGWGQPHGGGGWGQGGTH) are compositionally biased toward gly residues. H72, G73, G74, H80, G81, G82, H88, G89, G90, H96, and G98 together coordinate Cu(2+). C190 and C225 are joined by a disulfide. Residues N192 and N208 are each glycosylated (N-linked (GlcNAc...) asparagine). A241 is lipidated: GPI-anchor amidated alanine. Positions 242 to 264 (SVILFSSPPVILLISFLIFLIVG) are cleaved as a propeptide — removed in mature form.

This sequence belongs to the prion family. Monomer and homodimer. Has a tendency to aggregate into amyloid fibrils containing a cross-beta spine, formed by a steric zipper of superposed beta-strands. Soluble oligomers may represent an intermediate stage on the path to fibril formation. Copper binding may promote oligomerization. Interacts with GRB2, APP, ERI3/PRNPIP and SYN1. Mislocalized cytosolically exposed PrP interacts with MGRN1; this interaction alters MGRN1 subcellular location and causes lysosomal enlargement. Interacts with KIAA1191.

The protein localises to the cell membrane. Its subcellular location is the golgi apparatus. Its function is as follows. Its primary physiological function is unclear. Has cytoprotective activity against internal or environmental stresses. May play a role in neuronal development and synaptic plasticity. May be required for neuronal myelin sheath maintenance. May play a role in iron uptake and iron homeostasis. Soluble oligomers are toxic to cultured neuroblastoma cells and induce apoptosis (in vitro). Association with GPC1 (via its heparan sulfate chains) targets PRNP to lipid rafts. Also provides Cu(2+) or Zn(2+) for the ascorbate-mediated GPC1 deaminase degradation of its heparan sulfate side chains. In Ailuropoda melanoleuca (Giant panda), this protein is Major prion protein (PRNP).